Consider the following 614-residue polypeptide: DNA mismatch repair protein MutL (614 aa).

Belongs to the DNA mismatch repair MutL/HexB family.

Its function is as follows. This protein is involved in the repair of mismatches in DNA. It is required for dam-dependent methyl-directed DNA mismatch repair. May act as a 'molecular matchmaker', a protein that promotes the formation of a stable complex between two or more DNA-binding proteins in an ATP-dependent manner without itself being part of a final effector complex. The chain is DNA mismatch repair protein MutL from Leptospira biflexa serovar Patoc (strain Patoc 1 / ATCC 23582 / Paris).